The primary structure comprises 450 residues: Oxygen-independent coproporphyrinogen III oxidase (450 aa).

Positions 42–276 (LPAGASASLY…CAIANALKEA (235 aa)) constitute a Radical SAM core domain. Residue Y51 participates in S-adenosyl-L-methionine binding. [4Fe-4S] cluster is bound by residues C57 and C61. Y63 serves as a coordination point for S-adenosyl-L-methionine. C64 serves as a coordination point for [4Fe-4S] cluster. S-adenosyl-L-methionine is bound by residues G108, 109–110 (GT), E141, Q168, R180, D205, A239, and I325.

This sequence belongs to the anaerobic coproporphyrinogen-III oxidase family. As to quaternary structure, monomer. Requires [4Fe-4S] cluster as cofactor.

It is found in the cytoplasm. The catalysed reaction is coproporphyrinogen III + 2 S-adenosyl-L-methionine = protoporphyrinogen IX + 2 5'-deoxyadenosine + 2 L-methionine + 2 CO2. Its pathway is porphyrin-containing compound metabolism; protoporphyrin-IX biosynthesis; protoporphyrinogen-IX from coproporphyrinogen-III (AdoMet route): step 1/1. Involved in the heme biosynthesis. Catalyzes the anaerobic oxidative decarboxylation of propionate groups of rings A and B of coproporphyrinogen III to yield the vinyl groups in protoporphyrinogen IX. This chain is Oxygen-independent coproporphyrinogen III oxidase (hemN), found in Bradyrhizobium diazoefficiens (strain JCM 10833 / BCRC 13528 / IAM 13628 / NBRC 14792 / USDA 110).